Reading from the N-terminus, the 396-residue chain is Elongation factor Tu (396 aa).

Residues 10–206 (KPHCNIGTIG…AVDAYIPQPE (197 aa)) form the tr-type G domain. A G1 region spans residues 19 to 26 (GHVDHGKT). A GTP-binding site is contributed by 19-26 (GHVDHGKT). Threonine 26 is a Mg(2+) binding site. A G2 region spans residues 60–64 (GITIS). The segment at 81 to 84 (DCPG) is G3. Residues 81–85 (DCPGH) and 136–139 (NKCD) each bind GTP. The interval 136–139 (NKCD) is G4. Residues 174–176 (SAL) form a G5 region.

This sequence belongs to the TRAFAC class translation factor GTPase superfamily. Classic translation factor GTPase family. EF-Tu/EF-1A subfamily. Monomer.

It is found in the cytoplasm. It catalyses the reaction GTP + H2O = GDP + phosphate + H(+). GTP hydrolase that promotes the GTP-dependent binding of aminoacyl-tRNA to the A-site of ribosomes during protein biosynthesis. This Rhodopseudomonas palustris (strain BisB18) protein is Elongation factor Tu.